A 275-amino-acid chain; its full sequence is NH(3)-dependent NAD(+) synthetase (275 aa).

46 to 53 (GISGGQDS) contacts ATP. D52 contributes to the Mg(2+) binding site. R140 contacts deamido-NAD(+). An ATP-binding site is contributed by T160. Residue E165 participates in Mg(2+) binding. Residues K173 and D180 each coordinate deamido-NAD(+). K189 and T211 together coordinate ATP. A deamido-NAD(+)-binding site is contributed by 260–261 (HK).

This sequence belongs to the NAD synthetase family. Homodimer.

It carries out the reaction deamido-NAD(+) + NH4(+) + ATP = AMP + diphosphate + NAD(+) + H(+). It functions in the pathway cofactor biosynthesis; NAD(+) biosynthesis; NAD(+) from deamido-NAD(+) (ammonia route): step 1/1. Catalyzes the ATP-dependent amidation of deamido-NAD to form NAD. Uses ammonia as a nitrogen source. This is NH(3)-dependent NAD(+) synthetase from Salmonella arizonae (strain ATCC BAA-731 / CDC346-86 / RSK2980).